A 1648-amino-acid polypeptide reads, in one-letter code: Pleiotropic ABC efflux transporter of multiple drugs YBT1 (1648 aa).

Residues 28-48 form a helical membrane-spanning segment; sequence NYVPTTLVTISILILLHNFFI. An N-linked (GlcNAc...) asparagine glycan is attached at Asn-72. Helical transmembrane passes span 140–160, 175–195, 207–227, and 250–270; these read VVIE…LSIE, PHVL…LNLN, NIWL…ILPF, and LNLV…LPVL. Residue Asn-306 is glycosylated (N-linked (GlcNAc...) asparagine). 2 helical membrane-spanning segments follow: residues 352–372 and 392–412; these read FLNL…SIFV and MNLA…VAIC. The ABC transmembrane type-1 1 domain maps to 361–674; sequence CFTTISAFSI…ISDMLSYLIQ (314 aa). N-linked (GlcNAc...) asparagine glycosylation is present at Asn-471. 2 helical membrane passes run 501 to 521 and 523 to 543; these read ISEL…LTVS and ILLY…TIII. An N-linked (GlcNAc...) asparagine glycan is attached at Asn-573. A run of 2 helical transmembrane segments spans residues 612-632 and 643-662; these read VWCV…GCTF and LTTP…RDPL. Residues 706–947 enclose the ABC transporter 1 domain; the sequence is LAFENVTLRW…GLLGEDENMK (242 aa). N-linked (GlcNAc...) asparagine glycosylation is present at Asn-710. 741-748 serves as a coordination point for ATP; sequence GATGSGKT. N-linked (GlcNAc...) asparagine glycosylation is found at Asn-784 and Asn-798. The chain crosses the membrane as a helical span at residues 1012 to 1032; sequence MYGGWYTIVALASVFTAILCL. The ABC transmembrane type-1 2 domain occupies 1032-1333; that stretch reads LQITQAWWIR…LVRQYSELEM (302 aa). The N-linked (GlcNAc...) asparagine glycan is linked to Asn-1042. 3 consecutive transmembrane segments (helical) span residues 1089 to 1109, 1168 to 1188, and 1191 to 1211; these read IAKF…IGSI, IQSV…ISYI, and AFFP…FFYL. Asn-1255 is a glycosylation site (N-linked (GlcNAc...) asparagine). The next 2 membrane-spanning stretches (helical) occupy residues 1282–1302 and 1305–1325; these read LIGA…INNI and GLAG…LWLV. The ABC transporter 2 domain occupies 1372-1622; the sequence is VEVNNLSLKY…KKSIFYNMCE (251 aa). Asn-1376 carries N-linked (GlcNAc...) asparagine glycosylation. 1406-1413 is a binding site for ATP; the sequence is GRTGAGKS. Asn-1503, Asn-1524, and Asn-1573 each carry an N-linked (GlcNAc...) asparagine glycan.

The protein belongs to the ABC transporter superfamily. ABCC family. Conjugate transporter (TC 3.A.1.208) subfamily.

Its subcellular location is the membrane. In terms of biological role, pleiotropic ABC efflux transporter that might be involved in the resistance to azoles such as fluconazole. This chain is Pleiotropic ABC efflux transporter of multiple drugs YBT1, found in Candida glabrata (strain ATCC 2001 / BCRC 20586 / JCM 3761 / NBRC 0622 / NRRL Y-65 / CBS 138) (Yeast).